The sequence spans 125 residues: Small ribosomal subunit protein uS13 (125 aa).

Residues 94–125 form a disordered region; sequence SLPVRGQRTRTNARTRKGKRKTVAGKKKAVKK.

The protein belongs to the universal ribosomal protein uS13 family. As to quaternary structure, part of the 30S ribosomal subunit. Forms a loose heterodimer with protein S19. Forms two bridges to the 50S subunit in the 70S ribosome.

Functionally, located at the top of the head of the 30S subunit, it contacts several helices of the 16S rRNA. In the 70S ribosome it contacts the 23S rRNA (bridge B1a) and protein L5 of the 50S subunit (bridge B1b), connecting the 2 subunits; these bridges are implicated in subunit movement. Contacts the tRNAs in the A and P-sites. The polypeptide is Small ribosomal subunit protein uS13 (Chlorobium chlorochromatii (strain CaD3)).